A 118-amino-acid polypeptide reads, in one-letter code: Acetylcholine receptor subunit beta (118 aa).

The N-terminal stretch at 1–15 is a signal peptide; that stretch reads APTVALLLLCALCSA.

Belongs to the ligand-gated ion channel (TC 1.A.9) family. Acetylcholine receptor (TC 1.A.9.1) subfamily. Beta-1/CHRNB1 sub-subfamily. In terms of assembly, pentamer of two alpha chains, and one each of the beta, delta, and gamma chains.

It is found in the postsynaptic cell membrane. It localises to the cell membrane. The catalysed reaction is K(+)(in) = K(+)(out). It catalyses the reaction Na(+)(in) = Na(+)(out). In terms of biological role, after binding acetylcholine, the AChR responds by an extensive change in conformation that affects all subunits and leads to opening of an ion-conducting channel across the plasma membrane. This Gallus gallus (Chicken) protein is Acetylcholine receptor subunit beta (CHRNB1).